The primary structure comprises 434 residues: Methylenetetrahydrofolate--tRNA-(uracil-5-)-methyltransferase TrmFO (434 aa).

9-14 (GAGLAG) is an FAD binding site.

Belongs to the MnmG family. TrmFO subfamily. The cofactor is FAD.

It localises to the cytoplasm. The enzyme catalyses uridine(54) in tRNA + (6R)-5,10-methylene-5,6,7,8-tetrahydrofolate + NADH + H(+) = 5-methyluridine(54) in tRNA + (6S)-5,6,7,8-tetrahydrofolate + NAD(+). It catalyses the reaction uridine(54) in tRNA + (6R)-5,10-methylene-5,6,7,8-tetrahydrofolate + NADPH + H(+) = 5-methyluridine(54) in tRNA + (6S)-5,6,7,8-tetrahydrofolate + NADP(+). Catalyzes the folate-dependent formation of 5-methyl-uridine at position 54 (M-5-U54) in all tRNAs. This is Methylenetetrahydrofolate--tRNA-(uracil-5-)-methyltransferase TrmFO from Bacillus pumilus (strain SAFR-032).